Consider the following 116-residue polypeptide: Proline-rich protein 9 (116 aa).

The polypeptide is Proline-rich protein 9 (PRR9) (Bos taurus (Bovine)).